Consider the following 169-residue polypeptide: UPF0065 protein in clcB-clcD intergenic region (169 aa).

It belongs to the UPF0065 (bug) family.

It localises to the periplasm. The polypeptide is UPF0065 protein in clcB-clcD intergenic region (Pseudomonas knackmussii (strain DSM 6978 / CCUG 54928 / LMG 23759 / B13)).